The following is a 133-amino-acid chain: ATP synthase epsilon chain, chloroplastic (133 aa).

It belongs to the ATPase epsilon chain family. As to quaternary structure, F-type ATPases have 2 components, CF(1) - the catalytic core - and CF(0) - the membrane proton channel. CF(1) has five subunits: alpha(3), beta(3), gamma(1), delta(1), epsilon(1). CF(0) has three main subunits: a, b and c.

The protein resides in the plastid. It is found in the chloroplast thylakoid membrane. In terms of biological role, produces ATP from ADP in the presence of a proton gradient across the membrane. This Thalassiosira pseudonana (Marine diatom) protein is ATP synthase epsilon chain, chloroplastic.